The following is a 486-amino-acid chain: MKALDQLTFDNRFARLGDAFSTQVLPEPIADPRLVIASKSAMALLDLDPAQADTPVFAELFSGHKLWEGADPRAMVYSGHQFGSYNPRLGDGRGLLLAEVVNDAGEHWDLHLKGAGQTPYSRMGDGRAVLRSSIREFLASEALHALGIATSRALCVIGSSTPVWRETRESAAMLTRLAQSHVRFGHFEYFYYTKQPEQQRVLIDHVLEQHYPECREAEQPYLAMFRTIVERNAELIAHWQAYGFCHGVMNTDNMSILGITFDFGPYAFLDDFDANFICNHSDDRGRYSYANQVPIAHWNLSALAQALTTVIEVEPLKEALGLFLPLYQAHYLDLMRRRLGLTTAEDDDMALVERLLQRMQSGGVDYNLFFRRLGDQPVAEALKGVRDDFIDLAGFDAWGADYLARCEREAGNGDGRRERMHAVNPLYVLRNYLAQKAIEAAEAGDYSEVRRLHQVLSTPFEEQAGMQAYAERPPAWGKHLEISCSS.

8 residues coordinate ATP: glycine 90, glycine 92, arginine 93, lysine 113, aspartate 125, glycine 126, arginine 176, and arginine 183. Aspartate 252 acts as the Proton acceptor in catalysis. Asparagine 253 and aspartate 262 together coordinate Mg(2+). Residue aspartate 262 participates in ATP binding.

The protein belongs to the SELO family. Mg(2+) is required as a cofactor. Requires Mn(2+) as cofactor.

It carries out the reaction L-seryl-[protein] + ATP = 3-O-(5'-adenylyl)-L-seryl-[protein] + diphosphate. It catalyses the reaction L-threonyl-[protein] + ATP = 3-O-(5'-adenylyl)-L-threonyl-[protein] + diphosphate. The enzyme catalyses L-tyrosyl-[protein] + ATP = O-(5'-adenylyl)-L-tyrosyl-[protein] + diphosphate. The catalysed reaction is L-histidyl-[protein] + UTP = N(tele)-(5'-uridylyl)-L-histidyl-[protein] + diphosphate. It carries out the reaction L-seryl-[protein] + UTP = O-(5'-uridylyl)-L-seryl-[protein] + diphosphate. It catalyses the reaction L-tyrosyl-[protein] + UTP = O-(5'-uridylyl)-L-tyrosyl-[protein] + diphosphate. Nucleotidyltransferase involved in the post-translational modification of proteins. It can catalyze the addition of adenosine monophosphate (AMP) or uridine monophosphate (UMP) to a protein, resulting in modifications known as AMPylation and UMPylation. The polypeptide is Protein nucleotidyltransferase YdiU (Pseudomonas putida (strain W619)).